Here is a 181-residue protein sequence, read N- to C-terminus: tRNA-splicing endonuclease (181 aa).

Residues Tyr-118, His-126, and Lys-157 contribute to the active site.

The protein belongs to the tRNA-intron endonuclease family. Archaeal short subfamily. As to quaternary structure, homotetramer; although the tetramer contains four active sites, only two participate in the cleavage. Therefore, it should be considered as a dimer of dimers.

The enzyme catalyses pretRNA = a 3'-half-tRNA molecule with a 5'-OH end + a 5'-half-tRNA molecule with a 2',3'-cyclic phosphate end + an intron with a 2',3'-cyclic phosphate and a 5'-hydroxyl terminus.. In terms of biological role, endonuclease that removes tRNA introns. Cleaves pre-tRNA at the 5'- and 3'-splice sites to release the intron. The products are an intron and two tRNA half-molecules bearing 2',3' cyclic phosphate and 5'-OH termini. Recognizes a pseudosymmetric substrate in which 2 bulged loops of 3 bases are separated by a stem of 4 bp. The chain is tRNA-splicing endonuclease from Sulfolobus acidocaldarius (strain ATCC 33909 / DSM 639 / JCM 8929 / NBRC 15157 / NCIMB 11770).